The following is a 376-amino-acid chain: Protein FAM199X (376 aa).

The span at 237–253 (YIKEHSPRQRSTRESWK) shows a compositional bias: basic and acidic residues. The tract at residues 237 to 350 (YIKEHSPRQR…QRQARKERLS (114 aa)) is disordered. Positions 255–300 (TSYSTASTSGVSGASVSSSSASMVSTASSTGSSGGNSASNSSANMS) are enriched in low complexity. Residues 318–337 (DSKKRSKQRKLQQKALRKRQ) are compositionally biased toward basic residues. A coiled-coil region spans residues 320-349 (KKRSKQRKLQQKALRKRQLKEQRQARKERL). Residues 338 to 349 (LKEQRQARKERL) show a composition bias toward basic and acidic residues.

Belongs to the FAM199 family.

The chain is Protein FAM199X (fam199x) from Xenopus tropicalis (Western clawed frog).